Here is a 589-residue protein sequence, read N- to C-terminus: Transcription factor MYC4 (589 aa).

Residues 99-150 (NTVLLGWGDGYYKGEEEKSRKKKSNPASAAEQEHRKRVIRELNSLISGGVGG) form a JAZ-interaction domain region. 4 disordered regions span residues 114 to 133 (EEKS…QEHR), 291 to 326 (AAPV…PNPK), 340 to 359 (IENG…VSNN), and 381 to 422 (ASVA…EAER). A compositionally biased stretch (low complexity) spans 296–308 (NNGGNDSTSNSDS). The segment covering 309–322 (QPISKLCNGSSVEN) has biased composition (polar residues). Residues 381–398 (ASVAKEAESNRVVVEPEK) show a composition bias toward basic and acidic residues. Residues 399 to 408 (KPRKRGRKPA) show a composition bias toward basic residues. The segment covering 409 to 422 (NGREEPLNHVEAER) has biased composition (basic and acidic residues). The 50-residue stretch at 412 to 461 (EEPLNHVEAERQRREKLNQRFYSLRAVVPNVSKMDKASLLGDAISYISEL) folds into the bHLH domain.

As to quaternary structure, homo- and heterodimer. Interacts with MYB28, MYB29, MYB34, MYB51, MYB76, MYB122, MYC3, AFPH2/NINJA and the JAZ repressors TIFY10A/JAZ1, TIFY10B/JAZ2, TIFY6B/JAZ3, TIFY6A/JAZ4, TIFY11A/JAZ5, TIFY11B/JAZ6, TIFY5B/JAZ7, TIFY5A/JAZ8, TIFY7/JAZ9, TIFY9/JAZ10, TIFY3A/JAZ11 and TIFY3B/JAZ12. Expressed constitutively at low levels. Preferentially expressed in vascular tissues.

The protein resides in the nucleus. Transcription factor involved in jasmonic acid (JA) gene regulation. With MYC2 and MYC3, controls additively subsets of JA-dependent responses. Can form complexes with all known glucosinolate-related MYBs to regulate glucosinolate biosynthesis. Binds to the G-box (5'-CACGTG-3') of promoters. Activates multiple TIFY/JAZ promoters. This is Transcription factor MYC4 (MYC4) from Arabidopsis thaliana (Mouse-ear cress).